Reading from the N-terminus, the 130-residue chain is Protachykinin-1 (130 aa).

The signal sequence occupies residues 1-19 (MKILVAVAVFFLVSTQLFA). A propeptide spanning residues 20–56 (EEIDANDDLNYWSDWSDSDQIKEAMPEPFEHLLQRIA) is cleaved from the precursor. Methionine amide is present on residues methionine 68 and methionine 107.

Belongs to the tachykinin family. Post-translationally, the substance P form is cleaved at Pro-59 by the prolyl endopeptidase FAP (seprase) activity (in vitro). Substance P is also cleaved and degraded by Angiotensin-converting enzyme (ACE) and neprilysin (MME).

It localises to the secreted. In terms of biological role, tachykinins are active peptides which excite neurons, evoke behavioral responses, are potent vasodilators and secretagogues, and contract (directly or indirectly) many smooth muscles. In Mus musculus (Mouse), this protein is Protachykinin-1 (Tac1).